Consider the following 157-residue polypeptide: WPP domain-containing protein 3 (157 aa).

The span at methionine 1 to glutamate 20 shows a compositional bias: polar residues. Residues methionine 1 to threonine 41 are disordered. Residues histidine 32–threonine 41 show a composition bias toward basic and acidic residues. Residues threonine 37–alanine 138 are WPP; degenerate.

As to expression, expressed in roots, stems and leaves.

It localises to the cytoplasm. The protein localises to the nucleus. Regulates the mitotic activity in roots. This chain is WPP domain-containing protein 3 (WPP3), found in Arabidopsis thaliana (Mouse-ear cress).